Here is a 596-residue protein sequence, read N- to C-terminus: Arginine--tRNA ligase (596 aa).

Residues 123–133 carry the 'HIGH' region motif; the sequence is PNTNKPLHLGH.

This sequence belongs to the class-I aminoacyl-tRNA synthetase family. In terms of assembly, monomer.

The protein localises to the cytoplasm. It catalyses the reaction tRNA(Arg) + L-arginine + ATP = L-arginyl-tRNA(Arg) + AMP + diphosphate. In Amoebophilus asiaticus (strain 5a2), this protein is Arginine--tRNA ligase.